Reading from the N-terminus, the 256-residue chain is Thiazole synthase (256 aa).

Lysine 96 functions as the Schiff-base intermediate with DXP in the catalytic mechanism. Residues glycine 157, 183–184 (AG), and 205–206 (NT) contribute to the 1-deoxy-D-xylulose 5-phosphate site.

It belongs to the ThiG family. In terms of assembly, homotetramer. Forms heterodimers with either ThiH or ThiS.

It localises to the cytoplasm. The catalysed reaction is [ThiS sulfur-carrier protein]-C-terminal-Gly-aminoethanethioate + 2-iminoacetate + 1-deoxy-D-xylulose 5-phosphate = [ThiS sulfur-carrier protein]-C-terminal Gly-Gly + 2-[(2R,5Z)-2-carboxy-4-methylthiazol-5(2H)-ylidene]ethyl phosphate + 2 H2O + H(+). Its pathway is cofactor biosynthesis; thiamine diphosphate biosynthesis. Catalyzes the rearrangement of 1-deoxy-D-xylulose 5-phosphate (DXP) to produce the thiazole phosphate moiety of thiamine. Sulfur is provided by the thiocarboxylate moiety of the carrier protein ThiS. In vitro, sulfur can be provided by H(2)S. In Clostridioides difficile (strain 630) (Peptoclostridium difficile), this protein is Thiazole synthase.